Here is a 299-residue protein sequence, read N- to C-terminus: Protein-methionine-sulfoxide reductase catalytic subunit MsrP (299 aa).

A signal peptide (tat-type signal) is located at residues 1 to 44 (MAHRWINDLTPADITPRGAWMNRRQVMAGMAGAGLAAFAGSAQA). Mo-molybdopterin contacts are provided by residues asparagine 59, 62-63 (YE), cysteine 117, threonine 152, asparagine 200, arginine 205, and 216-218 (SIK).

The protein belongs to the MsrP family. In terms of assembly, heterodimer of a catalytic subunit (MsrP) and a heme-binding subunit (MsrQ). Requires Mo-molybdopterin as cofactor. In terms of processing, predicted to be exported by the Tat system. The position of the signal peptide cleavage has not been experimentally proven.

Its subcellular location is the periplasm. The catalysed reaction is L-methionyl-[protein] + a quinone + H2O = L-methionyl-(S)-S-oxide-[protein] + a quinol. The enzyme catalyses L-methionyl-[protein] + a quinone + H2O = L-methionyl-(R)-S-oxide-[protein] + a quinol. In terms of biological role, part of the MsrPQ system that repairs oxidized periplasmic proteins containing methionine sulfoxide residues (Met-O), using respiratory chain electrons. Thus protects these proteins from oxidative-stress damage caused by reactive species of oxygen and chlorine generated by the host defense mechanisms. MsrPQ is essential for the maintenance of envelope integrity under bleach stress, rescuing a wide series of structurally unrelated periplasmic proteins from methionine oxidation. The catalytic subunit MsrP is non-stereospecific, being able to reduce both (R-) and (S-) diastereoisomers of methionine sulfoxide. This chain is Protein-methionine-sulfoxide reductase catalytic subunit MsrP, found in Ruegeria pomeroyi (strain ATCC 700808 / DSM 15171 / DSS-3) (Silicibacter pomeroyi).